A 69-amino-acid chain; its full sequence is MTESRQTRLQVKCPTCQTAVVWKPENAFRPFCSQRCKLIDLGGWADGKYTVSSQTESLPEISEPDMAYR.

Residues Cys13, Cys16, Cys32, and Cys36 each contribute to the Zn(2+) site.

It belongs to the DNA gyrase inhibitor YacG family. In terms of assembly, interacts with GyrB. Requires Zn(2+) as cofactor.

Functionally, inhibits all the catalytic activities of DNA gyrase by preventing its interaction with DNA. Acts by binding directly to the C-terminal domain of GyrB, which probably disrupts DNA binding by the gyrase. This is DNA gyrase inhibitor YacG from Neisseria meningitidis serogroup C / serotype 2a (strain ATCC 700532 / DSM 15464 / FAM18).